The sequence spans 170 residues: Arginine repressor (170 aa).

The protein belongs to the ArgR family.

The protein localises to the cytoplasm. The protein operates within amino-acid biosynthesis; L-arginine biosynthesis [regulation]. Its function is as follows. Regulates arginine biosynthesis genes. This Bifidobacterium longum (strain NCC 2705) protein is Arginine repressor.